A 303-amino-acid polypeptide reads, in one-letter code: Uridylate-specific endoribonuclease C (303 aa).

Residues 1–16 (MVYLVFLCLLPSLISG) form the signal peptide. The 272-residue stretch at 32–303 (TDAEIQSLAE…KRFVASSYPI (272 aa)) folds into the EndoU domain. Active-site residues include His181, His196, and Lys239. An N-linked (GlcNAc...) asparagine glycan is attached at Asn287.

This sequence belongs to the ENDOU family. As to quaternary structure, monomer. Mn(2+) is required as a cofactor.

Its subcellular location is the secreted. It catalyses the reaction ribonucleotidyl-uridine-RNA = a 5'-end dephospho-uridine-RNA + a 3'-end 2',3'-cyclophospho-ribonucleotide-RNA. Endoribonuclease that cleaves single-stranded RNAs at 5' of uridylates and releases a product with a 2',3'-cyclic phosphate at the 3'-end. The polypeptide is Uridylate-specific endoribonuclease C (endou-c) (Xenopus laevis (African clawed frog)).